A 701-amino-acid chain; its full sequence is Elongation factor G (701 aa).

The tr-type G domain maps to Ser-8–Val-291. GTP-binding positions include Ala-17 to Thr-24, Asp-89 to His-93, and Asn-143 to Asp-146.

It belongs to the TRAFAC class translation factor GTPase superfamily. Classic translation factor GTPase family. EF-G/EF-2 subfamily.

It is found in the cytoplasm. Functionally, catalyzes the GTP-dependent ribosomal translocation step during translation elongation. During this step, the ribosome changes from the pre-translocational (PRE) to the post-translocational (POST) state as the newly formed A-site-bound peptidyl-tRNA and P-site-bound deacylated tRNA move to the P and E sites, respectively. Catalyzes the coordinated movement of the two tRNA molecules, the mRNA and conformational changes in the ribosome. This is Elongation factor G from Pseudomonas fluorescens (strain SBW25).